The following is a 633-amino-acid chain: Biosynthetic arginine decarboxylase (633 aa).

N6-(pyridoxal phosphate)lysine is present on K101. 284–294 provides a ligand contact to substrate; sequence VDVGGGLGVDY.

It belongs to the Orn/Lys/Arg decarboxylase class-II family. SpeA subfamily. The cofactor is Mg(2+). It depends on pyridoxal 5'-phosphate as a cofactor.

The enzyme catalyses L-arginine + H(+) = agmatine + CO2. It functions in the pathway amine and polyamine biosynthesis; agmatine biosynthesis; agmatine from L-arginine: step 1/1. Catalyzes the biosynthesis of agmatine from arginine. This chain is Biosynthetic arginine decarboxylase, found in Aeromonas salmonicida (strain A449).